A 283-amino-acid chain; its full sequence is Foldase protein PrsA 3 (283 aa).

The N-terminal stretch at 1 to 21 is a signal peptide; sequence MKKKKLFLGTIISCVVLALSA. A lipid anchor (N-palmitoyl cysteine) is attached at cysteine 22. Cysteine 22 carries the S-diacylglycerol cysteine lipid modification. Residues 132–222 enclose the PpiC domain; that stretch reads KPEMKVSHIL…YGYHIIKVTD (91 aa).

This sequence belongs to the PrsA family.

It is found in the cell membrane. It catalyses the reaction [protein]-peptidylproline (omega=180) = [protein]-peptidylproline (omega=0). In terms of biological role, plays a major role in protein secretion by helping the post-translocational extracellular folding of several secreted proteins. Important for the secretion of the protective antigen. The three PsrA proteins in this organism show different but overlapping substrate specificities. The chain is Foldase protein PrsA 3 (prsA3) from Bacillus anthracis.